We begin with the raw amino-acid sequence, 274 residues long: Putative hydro-lyase Veis_4744 (274 aa).

It belongs to the D-glutamate cyclase family.

The chain is Putative hydro-lyase Veis_4744 from Verminephrobacter eiseniae (strain EF01-2).